A 257-amino-acid chain; its full sequence is Diphthine synthase (257 aa).

S-adenosyl-L-methionine contacts are provided by residues leucine 9, aspartate 86, valine 89, 114–115 (SI), leucine 166, alanine 207, and histidine 232.

This sequence belongs to the diphthine synthase family. Homodimer.

The catalysed reaction is 2-[(3S)-amino-3-carboxypropyl]-L-histidyl-[translation elongation factor 2] + 3 S-adenosyl-L-methionine = diphthine-[translation elongation factor 2] + 3 S-adenosyl-L-homocysteine + 3 H(+). It participates in protein modification; peptidyl-diphthamide biosynthesis. S-adenosyl-L-methionine-dependent methyltransferase that catalyzes the trimethylation of the amino group of the modified target histidine residue in translation elongation factor 2 (EF-2), to form an intermediate called diphthine. The three successive methylation reactions represent the second step of diphthamide biosynthesis. The chain is Diphthine synthase from Methanocella arvoryzae (strain DSM 22066 / NBRC 105507 / MRE50).